The chain runs to 226 residues: UPF0173 metal-dependent hydrolase Tpet_1587 (226 aa).

It belongs to the UPF0173 family.

This Thermotoga petrophila (strain ATCC BAA-488 / DSM 13995 / JCM 10881 / RKU-1) protein is UPF0173 metal-dependent hydrolase Tpet_1587.